A 309-amino-acid chain; its full sequence is Glutamyl-Q tRNA(Asp) synthetase (309 aa).

L-glutamate is bound by residues 8-12 (RFSPS) and glutamate 44. The short motif at 11–21 (PSPTGPLHAGS) is the 'HIGH' region element. Cysteine 100, cysteine 102, tyrosine 126, and cysteine 130 together coordinate Zn(2+). Tyrosine 205 and arginine 223 together coordinate L-glutamate. The 'KMSKS' region signature appears at 261-265 (KLSKQ). An ATP-binding site is contributed by lysine 264.

This sequence belongs to the class-I aminoacyl-tRNA synthetase family. GluQ subfamily. It depends on Zn(2+) as a cofactor.

Functionally, catalyzes the tRNA-independent activation of glutamate in presence of ATP and the subsequent transfer of glutamate onto a tRNA(Asp). Glutamate is transferred on the 2-amino-5-(4,5-dihydroxy-2-cyclopenten-1-yl) moiety of the queuosine in the wobble position of the QUC anticodon. The sequence is that of Glutamyl-Q tRNA(Asp) synthetase from Albidiferax ferrireducens (strain ATCC BAA-621 / DSM 15236 / T118) (Rhodoferax ferrireducens).